Consider the following 270-residue polypeptide: Shikimate dehydrogenase (NADP(+)) (270 aa).

Residues 14–16 (SKS) and Thr-61 contribute to the shikimate site. Catalysis depends on Lys-65, which acts as the Proton acceptor. Shikimate contacts are provided by Asn-86 and Asp-101. NADP(+) contacts are provided by residues 126–130 (GAGGA), 150–155 (NRTVSK), and Met-213. Residue Tyr-215 coordinates shikimate. Gly-237 lines the NADP(+) pocket.

Belongs to the shikimate dehydrogenase family. Homodimer.

The catalysed reaction is shikimate + NADP(+) = 3-dehydroshikimate + NADPH + H(+). It functions in the pathway metabolic intermediate biosynthesis; chorismate biosynthesis; chorismate from D-erythrose 4-phosphate and phosphoenolpyruvate: step 4/7. In terms of biological role, involved in the biosynthesis of the chorismate, which leads to the biosynthesis of aromatic amino acids. Catalyzes the reversible NADPH linked reduction of 3-dehydroshikimate (DHSA) to yield shikimate (SA). In Hahella chejuensis (strain KCTC 2396), this protein is Shikimate dehydrogenase (NADP(+)).